Here is a 137-residue protein sequence, read N- to C-terminus: Large ribosomal subunit protein uL16 (137 aa).

The protein belongs to the universal ribosomal protein uL16 family. As to quaternary structure, part of the 50S ribosomal subunit.

Its function is as follows. Binds 23S rRNA and is also seen to make contacts with the A and possibly P site tRNAs. This Agrobacterium fabrum (strain C58 / ATCC 33970) (Agrobacterium tumefaciens (strain C58)) protein is Large ribosomal subunit protein uL16.